A 132-amino-acid chain; its full sequence is RING-H2 finger protein ATL39 (132 aa).

Residues 10–30 (TIVFAFASIGFIAFYIINYYI) form a helical membrane-spanning segment. Residues 85 to 127 (CVVCLNEFKDDETLRLVPPCVHVFHADCVDIWLSHSSTCPICR) form an RING-type; atypical zinc finger.

This sequence belongs to the RING-type zinc finger family. ATL subfamily.

It is found in the membrane. The enzyme catalyses S-ubiquitinyl-[E2 ubiquitin-conjugating enzyme]-L-cysteine + [acceptor protein]-L-lysine = [E2 ubiquitin-conjugating enzyme]-L-cysteine + N(6)-ubiquitinyl-[acceptor protein]-L-lysine.. The protein operates within protein modification; protein ubiquitination. This chain is RING-H2 finger protein ATL39 (ATL39), found in Arabidopsis thaliana (Mouse-ear cress).